Consider the following 390-residue polypeptide: Altered inheritance of mitochondria protein 6 (390 aa).

The N-terminal stretch at 1 to 17 (MLGLKGCLTILIGYVIA) is a signal peptide.

The protein belongs to the AIM6 family.

The sequence is that of Altered inheritance of mitochondria protein 6 from Saccharomyces cerevisiae (strain ATCC 204508 / S288c) (Baker's yeast).